The following is a 347-amino-acid chain: BSD domain-containing protein C22A12.14c (347 aa).

Residues Thr-123 and Thr-125 each carry the phosphothreonine modification. One can recognise a BSD domain in the interval 167–219; that stretch reads WEKEISIDGKTEEISLLLEEYPDLRKQMESLVPSEVSYDDFWKRFFWHKEVVQ. Residues 229 to 347 form a disordered region; that stretch reads DEEEIFSWGD…DDDEDDDDWE (119 aa). 3 positions are modified to phosphoserine: Ser-235, Ser-241, and Ser-246. Acidic residues predominate over residues 240 to 251; the sequence is RSDEEESDNEQV. The segment covering 297 to 312 has biased composition (basic and acidic residues); it reads HDGEVDGEVKEEEENK. Residues 313 to 325 are compositionally biased toward low complexity; the sequence is VSSSSNIEASQSS. Over residues 327-337 the composition is skewed to basic and acidic residues; it reads EVKDEANRKVD. The segment covering 338-347 has biased composition (acidic residues); it reads DDDEDDDDWE.

The protein localises to the cytoplasm. The protein is BSD domain-containing protein C22A12.14c of Schizosaccharomyces pombe (strain 972 / ATCC 24843) (Fission yeast).